The primary structure comprises 345 residues: Treponemal membrane protein A (345 aa).

The signal sequence occupies residues 1–21; that stretch reads MNAHTLVYSGVALACAAMLGS. Cys-22 carries N-palmitoyl cysteine lipidation. Residue Cys-22 is the site of S-diacylglycerol cysteine attachment. Residues 256 to 345 form a disordered region; it reads QSAKTKQKAS…SSMNEEGASR (90 aa). Residues 314–323 show a composition bias toward polar residues; it reads SDTSSPSRVQ.

It to T.phagedenis TmpA.

The protein resides in the cell membrane. The chain is Treponemal membrane protein A (tmpA) from Treponema pallidum (strain Nichols).